A 376-amino-acid polypeptide reads, in one-letter code: Lipid-A-disaccharide synthase (376 aa).

It belongs to the LpxB family.

The catalysed reaction is a lipid X + a UDP-2-N,3-O-bis[(3R)-3-hydroxyacyl]-alpha-D-glucosamine = a lipid A disaccharide + UDP + H(+). Its pathway is bacterial outer membrane biogenesis; LPS lipid A biosynthesis. Functionally, condensation of UDP-2,3-diacylglucosamine and 2,3-diacylglucosamine-1-phosphate to form lipid A disaccharide, a precursor of lipid A, a phosphorylated glycolipid that anchors the lipopolysaccharide to the outer membrane of the cell. The chain is Lipid-A-disaccharide synthase from Coxiella burnetii (strain RSA 331 / Henzerling II).